The primary structure comprises 79 residues: Small ribosomal subunit protein bS18 (79 aa).

The protein belongs to the bacterial ribosomal protein bS18 family. In terms of assembly, part of the 30S ribosomal subunit. Forms a tight heterodimer with protein bS6.

Its function is as follows. Binds as a heterodimer with protein bS6 to the central domain of the 16S rRNA, where it helps stabilize the platform of the 30S subunit. This is Small ribosomal subunit protein bS18 from Aster yellows witches'-broom phytoplasma (strain AYWB).